Here is a 412-residue protein sequence, read N- to C-terminus: Putative competence-damage inducible protein (412 aa).

It belongs to the CinA family.

This Bacillus anthracis protein is Putative competence-damage inducible protein.